The primary structure comprises 1508 residues: ABC-type transporter oblD (1508 aa).

Disordered regions lie at residues 1–35 (MSLG…LTNN) and 54–82 (KYTQ…PNGG). A compositionally biased stretch (polar residues) spans 11 to 24 (TPNSVMPSDASLHN). Residues Asn24 and Asn35 are each glycosylated (N-linked (GlcNAc...) asparagine). Positions 55 to 68 (YTQNSVYSTTSQNP) are enriched in polar residues. Asn83, Asn231, and Asn314 each carry an N-linked (GlcNAc...) asparagine glycan. The ABC transporter 1 domain maps to 136-390 (LEAVGLVRKL…FLNMGFVCPD (255 aa)). Transmembrane regions (helical) follow at residues 501-521 (ITIS…SMFF), 536-556 (LLFF…LTLY), 610-630 (GNFF…SMFF), 643-663 (ALPF…FTIP), and 752-772 (GIIF…SDFI). Positions 828 to 1070 (FQWKDICYDI…ILIDYFTRNG (243 aa)) constitute an ABC transporter 2 domain. 864–871 (GVSGAGKT) is a binding site for ATP. 4 helical membrane-spanning segments follow: residues 1172–1192 (YIYS…FSLY), 1206–1226 (FAIF…MPHF), 1296–1316 (LFVW…IAAL), and 1322–1342 (AGNM…ILTT). An N-linked (GlcNAc...) asparagine glycan is attached at Asn1390. A helical transmembrane segment spans residues 1443 to 1463 (FGLMWVFVVFNAFAACGLYYW).

This sequence belongs to the ABC transporter superfamily. ABCG family. PDR (TC 3.A.1.205) subfamily.

It is found in the cell membrane. In terms of biological role, ABC-type transporter; part of the gene cluster that mediates the biosynthesis of the sesterterpenes ophiobolins, fungal phytotoxins with potential anti-cancer activities. Acts as a specific transporter involved in ophiobolins secretion. This is ABC-type transporter oblD from Cochliobolus heterostrophus (strain C5 / ATCC 48332 / race O) (Southern corn leaf blight fungus).